A 1420-amino-acid chain; its full sequence is DNA-directed RNA polymerase subunit beta' (1420 aa).

Zn(2+) contacts are provided by C71, C73, C86, and C89. Residues D461, D463, and D465 each contribute to the Mg(2+) site. Residues C815, C889, C896, and C899 each coordinate Zn(2+).

This sequence belongs to the RNA polymerase beta' chain family. In terms of assembly, the RNAP catalytic core consists of 2 alpha, 1 beta, 1 beta' and 1 omega subunit. When a sigma factor is associated with the core the holoenzyme is formed, which can initiate transcription. It depends on Mg(2+) as a cofactor. Zn(2+) is required as a cofactor.

It carries out the reaction RNA(n) + a ribonucleoside 5'-triphosphate = RNA(n+1) + diphosphate. In terms of biological role, DNA-dependent RNA polymerase catalyzes the transcription of DNA into RNA using the four ribonucleoside triphosphates as substrates. The chain is DNA-directed RNA polymerase subunit beta' from Histophilus somni (strain 2336) (Haemophilus somnus).